Here is a 114-residue protein sequence, read N- to C-terminus: Pole-localizer protein TmaR (114 aa).

Residues arginine 70–asparagine 111 adopt a coiled-coil conformation. Residues lysine 89 to lysine 114 form a disordered region.

This sequence belongs to the pole-localizer TmaR family.

It localises to the cytoplasm. Functionally, pole-localizer protein involved in the regulation of several cellular processes. This chain is Pole-localizer protein TmaR, found in Haemophilus influenzae (strain 86-028NP).